The chain runs to 513 residues: Probable mannosyl-oligosaccharide alpha-1,2-mannosidase 1B (513 aa).

A signal peptide spans 1–21; that stretch reads MHLSSLSLSLTALAIVSPSAA. N-linked (GlcNAc...) asparagine glycans are attached at residues asparagine 97, asparagine 117, asparagine 184, asparagine 251, asparagine 322, asparagine 348, and asparagine 368. An intrachain disulfide couples cysteine 334 to cysteine 363. Glutamate 377 acts as the Proton donor in catalysis. Residue threonine 503 participates in Ca(2+) binding.

The protein belongs to the glycosyl hydrolase 47 family. As to quaternary structure, monomer. Ca(2+) is required as a cofactor. Mg(2+) serves as cofactor.

Its subcellular location is the cytoplasmic vesicle lumen. It catalyses the reaction N(4)-(alpha-D-Man-(1-&gt;2)-alpha-D-Man-(1-&gt;2)-alpha-D-Man-(1-&gt;3)-[alpha-D-Man-(1-&gt;2)-alpha-D-Man-(1-&gt;3)-[alpha-D-Man-(1-&gt;2)-alpha-D-Man-(1-&gt;6)]-alpha-D-Man-(1-&gt;6)]-beta-D-Man-(1-&gt;4)-beta-D-GlcNAc-(1-&gt;4)-beta-D-GlcNAc)-L-asparaginyl-[protein] (N-glucan mannose isomer 9A1,2,3B1,2,3) + 4 H2O = N(4)-(alpha-D-Man-(1-&gt;3)-[alpha-D-Man-(1-&gt;3)-[alpha-D-Man-(1-&gt;6)]-alpha-D-Man-(1-&gt;6)]-beta-D-Man-(1-&gt;4)-beta-D-GlcNAc-(1-&gt;4)-beta-D-GlcNAc)-L-asparaginyl-[protein] (N-glucan mannose isomer 5A1,2) + 4 beta-D-mannose. It carries out the reaction N(4)-(alpha-D-Man-(1-&gt;2)-alpha-D-Man-(1-&gt;2)-alpha-D-Man-(1-&gt;3)-[alpha-D-Man-(1-&gt;3)-[alpha-D-Man-(1-&gt;2)-alpha-D-Man-(1-&gt;6)]-alpha-D-Man-(1-&gt;6)]-beta-D-Man-(1-&gt;4)-beta-D-GlcNAc-(1-&gt;4)-beta-D-GlcNAc)-L-asparaginyl-[protein] (N-glucan mannose isomer 8A1,2,3B1,3) + 3 H2O = N(4)-(alpha-D-Man-(1-&gt;3)-[alpha-D-Man-(1-&gt;3)-[alpha-D-Man-(1-&gt;6)]-alpha-D-Man-(1-&gt;6)]-beta-D-Man-(1-&gt;4)-beta-D-GlcNAc-(1-&gt;4)-beta-D-GlcNAc)-L-asparaginyl-[protein] (N-glucan mannose isomer 5A1,2) + 3 beta-D-mannose. It functions in the pathway protein modification; protein glycosylation. Involved in the maturation of Asn-linked oligosaccharides. Progressively trims alpha-1,2-linked mannose residues from Man(9)GlcNAc(2) to produce Man(5)GlcNAc(2). This Aspergillus niger (strain ATCC MYA-4892 / CBS 513.88 / FGSC A1513) protein is Probable mannosyl-oligosaccharide alpha-1,2-mannosidase 1B (mns1B).